We begin with the raw amino-acid sequence, 510 residues long: Peptide transporter imqJ (510 aa).

A run of 3 helical transmembrane segments spans residues 1–21, 31–51, and 57–77; these read MVNQ…AVVA, IIFS…SSLP, and GISL…TGGI. The N-linked (GlcNAc...) asparagine glycan is linked to Asn-80. Transmembrane regions (helical) follow at residues 116-136, 143-163, 231-251, and 269-289; these read IFTT…LITI, FSAA…IVLV, IFIL…NFIS, and IDPI…FPFL. In terms of domain architecture, Fe2OG dioxygenase spans 348-468; it reads PAASEIRLLY…RCSSVFFFKA (121 aa). Fe cation contacts are provided by His-377 and Asp-379. The N-linked (GlcNAc...) asparagine glycan is linked to Asn-421. His-439 serves as a coordination point for Fe cation. Residue Arg-459 coordinates 2-oxoglutarate.

It belongs to the major facilitator superfamily. Proton-dependent oligopeptide transporter (POT/PTR) (TC 2.A.17) family.

The protein resides in the membrane. In terms of biological role, peptide transporter; part of the gene cluster that mediates the biosynthesis of imizoquins A to D, tripeptide-derived alkaloids that serve a protective role against oxidative stress that are essential for normal germination. The chain is Peptide transporter imqJ from Aspergillus flavus (strain ATCC 200026 / FGSC A1120 / IAM 13836 / NRRL 3357 / JCM 12722 / SRRC 167).